The primary structure comprises 540 residues: Putative cysteine ligase BshC (540 aa).

The stretch at 457–477 (EKNRAFIQGQIAFLKERMERE) forms a coiled coil.

Belongs to the BshC family.

In terms of biological role, involved in bacillithiol (BSH) biosynthesis. May catalyze the last step of the pathway, the addition of cysteine to glucosamine malate (GlcN-Mal) to generate BSH. The chain is Putative cysteine ligase BshC from Shouchella clausii (strain KSM-K16) (Alkalihalobacillus clausii).